The following is a 358-amino-acid chain: 3-isopropylmalate dehydrogenase (358 aa).

75-88 lines the NAD(+) pocket; the sequence is GPKWETLPPEKQPE. Arg-96, Arg-106, Arg-135, and Asp-225 together coordinate substrate. Asp-225, Asp-249, and Asp-253 together coordinate Mg(2+). Residue 283 to 295 participates in NAD(+) binding; that stretch reads GSAPDIAGKGVAN.

The protein belongs to the isocitrate and isopropylmalate dehydrogenases family. LeuB type 1 subfamily. As to quaternary structure, homodimer. Mg(2+) is required as a cofactor. Mn(2+) serves as cofactor.

It is found in the cytoplasm. It carries out the reaction (2R,3S)-3-isopropylmalate + NAD(+) = 4-methyl-2-oxopentanoate + CO2 + NADH. It participates in amino-acid biosynthesis; L-leucine biosynthesis; L-leucine from 3-methyl-2-oxobutanoate: step 3/4. Functionally, catalyzes the oxidation of 3-carboxy-2-hydroxy-4-methylpentanoate (3-isopropylmalate) to 3-carboxy-4-methyl-2-oxopentanoate. The product decarboxylates to 4-methyl-2 oxopentanoate. This Leptospira interrogans serogroup Icterohaemorrhagiae serovar copenhageni (strain Fiocruz L1-130) protein is 3-isopropylmalate dehydrogenase.